We begin with the raw amino-acid sequence, 478 residues long: 3-isopropylmalate dehydratase large subunit (478 aa).

The [4Fe-4S] cluster site is built by Cys347, Cys407, and Cys410.

It belongs to the aconitase/IPM isomerase family. LeuC type 1 subfamily. Heterodimer of LeuC and LeuD. It depends on [4Fe-4S] cluster as a cofactor.

It carries out the reaction (2R,3S)-3-isopropylmalate = (2S)-2-isopropylmalate. The protein operates within amino-acid biosynthesis; L-leucine biosynthesis; L-leucine from 3-methyl-2-oxobutanoate: step 2/4. In terms of biological role, catalyzes the isomerization between 2-isopropylmalate and 3-isopropylmalate, via the formation of 2-isopropylmaleate. The protein is 3-isopropylmalate dehydratase large subunit of Prochlorococcus marinus (strain MIT 9313).